The chain runs to 267 residues: Hydroxyethylthiazole kinase (267 aa).

A substrate-binding site is contributed by Met-44. ATP-binding residues include Lys-120 and Thr-166. Gly-193 serves as a coordination point for substrate.

The protein belongs to the Thz kinase family. The cofactor is Mg(2+).

It carries out the reaction 5-(2-hydroxyethyl)-4-methylthiazole + ATP = 4-methyl-5-(2-phosphooxyethyl)-thiazole + ADP + H(+). Its pathway is cofactor biosynthesis; thiamine diphosphate biosynthesis; 4-methyl-5-(2-phosphoethyl)-thiazole from 5-(2-hydroxyethyl)-4-methylthiazole: step 1/1. Catalyzes the phosphorylation of the hydroxyl group of 4-methyl-5-beta-hydroxyethylthiazole (THZ). This is Hydroxyethylthiazole kinase from Desulfitobacterium hafniense (strain DSM 10664 / DCB-2).